A 426-amino-acid polypeptide reads, in one-letter code: Tol-Pal system protein TolB (426 aa).

The N-terminal stretch at Met1–Ala25 is a signal peptide.

This sequence belongs to the TolB family. The Tol-Pal system is composed of five core proteins: the inner membrane proteins TolA, TolQ and TolR, the periplasmic protein TolB and the outer membrane protein Pal. They form a network linking the inner and outer membranes and the peptidoglycan layer.

The protein resides in the periplasm. Functionally, part of the Tol-Pal system, which plays a role in outer membrane invagination during cell division and is important for maintaining outer membrane integrity. The chain is Tol-Pal system protein TolB from Aromatoleum aromaticum (strain DSM 19018 / LMG 30748 / EbN1) (Azoarcus sp. (strain EbN1)).